A 327-amino-acid polypeptide reads, in one-letter code: G-protein coupled receptor 55 (327 aa).

Residues 1–20 (MSQPERDNCSFDSVDKLTRT) lie on the Extracellular side of the membrane. N-linked (GlcNAc...) asparagine glycosylation occurs at asparagine 8. Residues 21–41 (LQLAVHIPTFLLGLVLNLLAI) form a helical membrane-spanning segment. Residues 42–57 (RGFSAFLKKRKLDYIA) are Cytoplasmic-facing. The helical transmembrane segment at 58–78 (TSIYMINLAVFDLLLVLSLPF) threads the bilayer. At 79-93 (KMVLPQVESPLPSFC) the chain is on the extracellular side. A helical membrane pass occupies residues 94-114 (TLVECLYFISMYGSVFTICFI). The Cytoplasmic segment spans residues 115 to 136 (SLDRFLAIQYPILASHLRSPRK). The chain crosses the membrane as a helical span at residues 137–157 (TFGICCIIWMLVWIGSIPIYT). Residues 158–179 (FHREVERYKCFHNMSDVTWSAS) are Extracellular-facing. An N-linked (GlcNAc...) asparagine glycan is attached at asparagine 170. Residues 180–200 (VFFPLEIFGFLLPMGIMGFCS) traverse the membrane as a helical segment. Residues 201–239 (YRSIHILLRRPDSTEDWVQQRDTKGWVQKRACIWTIATN) are Cytoplasmic-facing. A helical membrane pass occupies residues 240–260 (LVIFVVSFLPVHLGFFLQYLV). Topologically, residues 261 to 279 (RNRFILDCRMKQGISLFLQ) are extracellular. A helical transmembrane segment spans residues 280–300 (LSLCFSNINCCLDVFCYYFVI). Residues 301 to 327 (KEFRMRIKAHRPSTIKLVNQDTMVSRG) lie on the Cytoplasmic side of the membrane.

This sequence belongs to the G-protein coupled receptor 1 family. As to expression, highly expressed in splenic plasma cells.

Its subcellular location is the cell membrane. G-protein coupled receptor that binds to several ligands including 2-arachidonoyl lysophosphatidylinositol or lysophosphatidylglucoside with high affinity, leading to rapid and transient activation of numerous intracellular signaling pathways. Induces the Ca(2+) release from intracellular stores via ERK, the heterotrimeric G protein GNA13 and RHOA leading to morphological changes including cell rounding and stress fiber formation. In macrophages, acts downstream of lysophosphatidylglucoside to inhibit the translocation of the phospholipid-transporting ABCA1 to plasma membrane and subsequent cholesterol efflux leading to lipid accumulation and foam cell formation. May be involved in hyperalgesia associated with inflammatory and neuropathic pain. This chain is G-protein coupled receptor 55 (Gpr55), found in Mus musculus (Mouse).